The chain runs to 1843 residues: Xin actin-binding repeat-containing protein 1 (1843 aa).

Residues 1–10 (MADTQTQVAP) show a composition bias toward polar residues. Residues 1 to 48 (MADTQTQVAPTPTMRMATAEDLPLPPPPALEDLPLPPPKESFSKFHQQ) form a disordered region. Residues 1-54 (MADTQTQVAPTPTMRMATAEDLPLPPPPALEDLPLPPPKESFSKFHQQRQASEL) form an interaction with VASP region. Pro residues predominate over residues 23 to 39 (PLPPPPALEDLPLPPPK). Xin repeat units follow at residues 89–104 (GDVQ…WRLD), 121–136 (GDVQ…GSFA), 151–166 (GDVR…KPLD), and 186–201 (GDVQ…RPLD). Positions 132–151 (EGSFANSTDQEPTRPQPGGG) are disordered. Serine 205, serine 208, and serine 213 each carry phosphoserine. 2 Xin repeats span residues 226-241 (GDVK…EPLC) and 264-279 (NAVR…RPLD). Serine 295 is subject to Phosphoserine. One copy of the Xin 7 repeat lies at 302–317 (PDVSATRWIFETQPLD). Serine 332 is modified (phosphoserine). 2 Xin repeats span residues 340-355 (PDVQ…RALD) and 376-391 (GDVR…KPLD). Residues 406-432 (DPQDGEGHLSSDSSSALPFSQSAPQRD) are disordered. A compositionally biased stretch (low complexity) spans 415 to 429 (SSDSSSALPFSQSAP). Residues 436-451 (GDVKTFKNLFETLPLD) form a Xin 10 repeat. The disordered stretch occupies residues 455 to 479 (QGEVLAHGSPSREEGTDSAGQAQGI). 2 Xin repeats span residues 507–522 (GDVQ…QPLD) and 545–560 (GDVG…QPLE). The interval 531-632 (IDVVRGITRQ…AQSCTWMFKP (102 aa)) is interaction with CTNNB1. Residues 564-577 (QREQQERQKEEGKS) show a composition bias toward basic and acidic residues. The segment at 564 to 591 (QREQQERQKEEGKSQGDPQPEAPPKGDV) is disordered. 5 Xin repeats span residues 589–604 (GDVQ…CPMS), 621–636 (AEAQ…QPVD), 654–669 (GERQ…EPLQ), 691–706 (GQVS…LEAG), and 723–738 (GSVH…CPMG). Disordered regions lie at residues 943–999 (SLRW…QAIG), 1063–1205 (AEAQ…MAWG), 1238–1277 (SGPQ…HRAE), 1289–1471 (DPLL…QKEL), and 1561–1696 (MSSL…DVSV). Composition is skewed to polar residues over residues 1064–1073 (EAQSLHQQVL) and 1080–1089 (PTPTATSNPI). Residues 1294-1311 (SHSSPAGQRTPGGSQTKT) are compositionally biased toward polar residues. A compositionally biased stretch (basic and acidic residues) spans 1357 to 1368 (GQREHQRGERDT). The span at 1393–1424 (GHSQPSLQHGLSTTAPRPTKNQATGSNAQSSE) shows a compositional bias: polar residues. The stretch at 1462–1490 (DSLQRNQKELQGLLNQVQALEKEAASSVD) forms a coiled coil. Composition is skewed to polar residues over residues 1588–1600 (VTVS…SGSG) and 1663–1679 (SRDS…QSAT). Positions 1685-1843 (TPSFKGNPDV…SCSYSQPAAQ (159 aa)) are interaction with FLNC.

This sequence belongs to the Xin family. Interacts (via N-terminus) with CTTN; the interaction promotes CTTN localization to intercalated disks in cardiomyocytes. Interacts with CTNNB1. Interacts with FLNC and VASP. Interacts with F-actin. In terms of tissue distribution, expressed in skeletal muscle at areas of Z-disk disruption in a longitudinal pattern spanning one or more sarcomeres (at protein level). Expressed in the heart (at protein level). As to expression, expressed in the heart.

The protein localises to the cell junction. It is found in the adherens junction. Its subcellular location is the desmosome. Its function is as follows. Protects actin filaments from depolymerization. Required for correct cardiac intercalated disk ultrastructure via maintenance of cell-cell adhesion stability, and as a result maintains cardiac organ morphology, conductance and heart beat rhythm. Required for development of normal skeletal muscle morphology and muscle fiber type composition. Plays a role in regulating muscle satellite cell activation and survival, as a result promotes muscle fiber recovery from injury and fatigue. The chain is Xin actin-binding repeat-containing protein 1 from Homo sapiens (Human).